A 215-amino-acid polypeptide reads, in one-letter code: NAD(P)H-hydrate epimerase (215 aa).

The YjeF N-terminal domain occupies 8-212; it reads MYNIENKGHD…KIGIPPEAEE (205 aa). (6S)-NADPHX is bound at residue 57–61; that stretch reads NNGGD. Asn-58 and Asp-124 together coordinate K(+). Residues 128–134, Tyr-139, and Asp-157 each bind (6S)-NADPHX; that span reads GTGISGE. Ser-160 contributes to the K(+) binding site.

The protein belongs to the NnrE/AIBP family. It depends on K(+) as a cofactor.

The enzyme catalyses (6R)-NADHX = (6S)-NADHX. It carries out the reaction (6R)-NADPHX = (6S)-NADPHX. Catalyzes the epimerization of the S- and R-forms of NAD(P)HX, a damaged form of NAD(P)H that is a result of enzymatic or heat-dependent hydration. This is a prerequisite for the S-specific NAD(P)H-hydrate dehydratase to allow the repair of both epimers of NAD(P)HX. The chain is NAD(P)H-hydrate epimerase from Nitrosopumilus maritimus (strain SCM1).